Reading from the N-terminus, the 860-residue chain is Alanine--tRNA ligase (860 aa).

Residues His-563, His-567, Cys-665, and His-669 each coordinate Zn(2+). The interval 824-843 (VGGKGGGRPDMAQAGGTDSS) is disordered.

It belongs to the class-II aminoacyl-tRNA synthetase family. Zn(2+) serves as cofactor.

Its subcellular location is the cytoplasm. It catalyses the reaction tRNA(Ala) + L-alanine + ATP = L-alanyl-tRNA(Ala) + AMP + diphosphate. In terms of biological role, catalyzes the attachment of alanine to tRNA(Ala) in a two-step reaction: alanine is first activated by ATP to form Ala-AMP and then transferred to the acceptor end of tRNA(Ala). Also edits incorrectly charged Ser-tRNA(Ala) and Gly-tRNA(Ala) via its editing domain. The protein is Alanine--tRNA ligase of Vibrio vulnificus (strain YJ016).